Reading from the N-terminus, the 360-residue chain is Peptide chain release factor 1 (360 aa).

Glutamine 235 bears the N5-methylglutamine mark. A compositionally biased stretch (polar residues) spans alanine 285 to lysine 295. Residues alanine 285–aspartate 305 form a disordered region.

Belongs to the prokaryotic/mitochondrial release factor family. In terms of processing, methylated by PrmC. Methylation increases the termination efficiency of RF1.

It is found in the cytoplasm. Its function is as follows. Peptide chain release factor 1 directs the termination of translation in response to the peptide chain termination codons UAG and UAA. This chain is Peptide chain release factor 1, found in Thiobacillus denitrificans (strain ATCC 25259 / T1).